Consider the following 811-residue polypeptide: DNA mismatch repair protein MutS (811 aa).

595–602 (GPNMSGKS) contributes to the ATP binding site.

The protein belongs to the DNA mismatch repair MutS family.

Functionally, this protein is involved in the repair of mismatches in DNA. It is possible that it carries out the mismatch recognition step. This protein has a weak ATPase activity. The protein is DNA mismatch repair protein MutS of Pseudothermotoga lettingae (strain ATCC BAA-301 / DSM 14385 / NBRC 107922 / TMO) (Thermotoga lettingae).